The following is a 601-amino-acid chain: Probable serine/threonine-protein kinase WNK3 (601 aa).

The region spanning 34–291 (GRFNEILGKG…ARELLDDPFL (258 aa)) is the Protein kinase domain. Residues 114–117 (TELF) and lysine 164 each bind ATP. Residue aspartate 181 is the Proton acceptor of the active site. 2 disordered regions span residues 470-498 (GWRP…PGGA) and 551-601 (ADDD…SEQP). Residues 477–493 (TDDDDDDDLVGGGDDPD) show a composition bias toward acidic residues. Positions 560–571 (LQGSSSDTGGSN) are enriched in polar residues. Over residues 572–583 (HEQHAMGKDKEV) the composition is skewed to basic and acidic residues.

It belongs to the protein kinase superfamily. Ser/Thr protein kinase family. WNK subfamily.

The catalysed reaction is L-seryl-[protein] + ATP = O-phospho-L-seryl-[protein] + ADP + H(+). The enzyme catalyses L-threonyl-[protein] + ATP = O-phospho-L-threonyl-[protein] + ADP + H(+). This Oryza sativa subsp. japonica (Rice) protein is Probable serine/threonine-protein kinase WNK3 (WNK3).